The primary structure comprises 380 residues: Probable dual-specificity RNA methyltransferase RlmN (380 aa).

Catalysis depends on Glu123, which acts as the Proton acceptor. Residues 129 to 362 (HEYGNSVCVT…VTIRREQGSD (234 aa)) form the Radical SAM core domain. An intrachain disulfide couples Cys136 to Cys367. [4Fe-4S] cluster is bound by residues Cys143, Cys147, and Cys150. S-adenosyl-L-methionine is bound by residues 193–194 (GE), Ser225, 248–250 (SLH), and Asn324. The active-site S-methylcysteine intermediate is Cys367.

This sequence belongs to the radical SAM superfamily. RlmN family. [4Fe-4S] cluster serves as cofactor.

The protein localises to the cytoplasm. It catalyses the reaction adenosine(2503) in 23S rRNA + 2 reduced [2Fe-2S]-[ferredoxin] + 2 S-adenosyl-L-methionine = 2-methyladenosine(2503) in 23S rRNA + 5'-deoxyadenosine + L-methionine + 2 oxidized [2Fe-2S]-[ferredoxin] + S-adenosyl-L-homocysteine. The enzyme catalyses adenosine(37) in tRNA + 2 reduced [2Fe-2S]-[ferredoxin] + 2 S-adenosyl-L-methionine = 2-methyladenosine(37) in tRNA + 5'-deoxyadenosine + L-methionine + 2 oxidized [2Fe-2S]-[ferredoxin] + S-adenosyl-L-homocysteine. In terms of biological role, specifically methylates position 2 of adenine 2503 in 23S rRNA and position 2 of adenine 37 in tRNAs. This Lysinibacillus sphaericus (strain C3-41) protein is Probable dual-specificity RNA methyltransferase RlmN.